A 276-amino-acid polypeptide reads, in one-letter code: Formamidopyrimidine-DNA glycosylase (276 aa).

The active-site Schiff-base intermediate with DNA is the P2. E3 functions as the Proton donor in the catalytic mechanism. The Proton donor; for beta-elimination activity role is filled by K58. Residues H94, R112, and R157 each contribute to the DNA site. Residues 242-276 (FVYDRAGQPCRVCGTPIKQIVQGQRSTYYCPTCQR) form an FPG-type zinc finger. R266 functions as the Proton donor; for delta-elimination activity in the catalytic mechanism.

It belongs to the FPG family. In terms of assembly, monomer. Zn(2+) serves as cofactor.

It carries out the reaction Hydrolysis of DNA containing ring-opened 7-methylguanine residues, releasing 2,6-diamino-4-hydroxy-5-(N-methyl)formamidopyrimidine.. The enzyme catalyses 2'-deoxyribonucleotide-(2'-deoxyribose 5'-phosphate)-2'-deoxyribonucleotide-DNA = a 3'-end 2'-deoxyribonucleotide-(2,3-dehydro-2,3-deoxyribose 5'-phosphate)-DNA + a 5'-end 5'-phospho-2'-deoxyribonucleoside-DNA + H(+). In terms of biological role, involved in base excision repair of DNA damaged by oxidation or by mutagenic agents. Acts as a DNA glycosylase that recognizes and removes damaged bases. Has a preference for oxidized purines, such as 7,8-dihydro-8-oxoguanine (8-oxoG). Has AP (apurinic/apyrimidinic) lyase activity and introduces nicks in the DNA strand. Cleaves the DNA backbone by beta-delta elimination to generate a single-strand break at the site of the removed base with both 3'- and 5'-phosphates. In Paraburkholderia phymatum (strain DSM 17167 / CIP 108236 / LMG 21445 / STM815) (Burkholderia phymatum), this protein is Formamidopyrimidine-DNA glycosylase.